Here is a 227-residue protein sequence, read N- to C-terminus: Probable septum site-determining protein MinC (227 aa).

It belongs to the MinC family. In terms of assembly, interacts with MinD and FtsZ.

In terms of biological role, cell division inhibitor that blocks the formation of polar Z ring septums. Rapidly oscillates between the poles of the cell to destabilize FtsZ filaments that have formed before they mature into polar Z rings. Prevents FtsZ polymerization. This chain is Probable septum site-determining protein MinC, found in Bacillus pumilus (strain SAFR-032).